Consider the following 250-residue polypeptide: Agamous-like MADS-box protein AGL8 homolog (250 aa).

In terms of domain architecture, MADS-box spans 3–57; that stretch reads RGRVQLKRIENKINRQVTFSKRRSGLLKKAHEISVLCDAEVGLIVFSTKGKLFEY. The K-box domain maps to 88-178; that stretch reads PGSWTLEHAK…SKKVKEREKE (91 aa).

In terms of tissue distribution, abundant in vegetative organs.

The protein localises to the nucleus. Functionally, probable transcription factor. This chain is Agamous-like MADS-box protein AGL8 homolog, found in Solanum tuberosum (Potato).